The primary structure comprises 118 residues: Ribulose bisphosphate carboxylase small subunit (118 aa).

This sequence belongs to the RuBisCO small chain family. In terms of assembly, heterohexadecamer of 8 large and 8 small subunits.

Functionally, ruBisCO catalyzes two reactions: the carboxylation of D-ribulose 1,5-bisphosphate, the primary event in carbon dioxide fixation, as well as the oxidative fragmentation of the pentose substrate. Both reactions occur simultaneously and in competition at the same active site. Although the small subunit is not catalytic it is essential for maximal activity. This Rhodobacter capsulatus (Rhodopseudomonas capsulata) protein is Ribulose bisphosphate carboxylase small subunit.